Here is a 189-residue protein sequence, read N- to C-terminus: HTH-type transcriptional repressor AcnR (189 aa).

In terms of domain architecture, HTH tetR-type spans 10–70; the sequence is AERKVEILSG…EVAHEDMRKM (61 aa). A DNA-binding region (H-T-H motif) is located at residues 33–52; sequence TVARLEETIGKSRGAIFHHY. Citrate is bound by residues 79 to 80, Arg-130, and Gln-134; that span reads LI. Glu-181 contacts Mg(2+). Arg-185 is a citrate binding site.

In terms of assembly, homodimer.

Functionally, acnR negatively controls the expression of the aconitase gene acn. This Corynebacterium jeikeium (strain K411) protein is HTH-type transcriptional repressor AcnR.